The chain runs to 101 residues: Small ribosomal subunit protein uS14 (101 aa).

A disordered region spans residues 36–72; the sequence is GTDESREAARAGIQRLPRDASPIRVRNRDGIDGRPRG. Over residues 61–70 the composition is skewed to basic and acidic residues; it reads RNRDGIDGRP.

It belongs to the universal ribosomal protein uS14 family. As to quaternary structure, part of the 30S ribosomal subunit. Contacts proteins S3 and S10.

Its function is as follows. Binds 16S rRNA, required for the assembly of 30S particles and may also be responsible for determining the conformation of the 16S rRNA at the A site. This Clavibacter michiganensis subsp. michiganensis (strain NCPPB 382) protein is Small ribosomal subunit protein uS14.